The sequence spans 132 residues: Intraflagellar transport protein 20 homolog B (132 aa).

Positions 87–112 (EAQQQQLYALIAEKKMQLERYRIEYD) form a coiled coil.

It localises to the golgi apparatus. The protein localises to the cis-Golgi network. The protein resides in the cytoplasm. Its subcellular location is the cytoskeleton. It is found in the microtubule organizing center. It localises to the centrosome. The protein localises to the centriole. The protein resides in the cell projection. Its subcellular location is the cilium. In terms of biological role, involved in ciliary process assembly. May play a role in the trafficking of ciliary membrane proteins from the Golgi complex to the cilium. Regulates the platelet-derived growth factor receptor-alpha (PDGFRA) signaling pathway. Plays an important role in spermatogenesis, particularly spermiogenesis, when germ cells form flagella. In Xenopus laevis (African clawed frog), this protein is Intraflagellar transport protein 20 homolog B (ift20-b).